A 230-amino-acid chain; its full sequence is 3,4-dihydroxy-2-butanone 4-phosphate synthase (230 aa).

Residues 42–43 (RE), D47, 155–159 (RRGHT), and E179 each bind D-ribulose 5-phosphate. Mg(2+) is bound at residue E43. Residue H158 participates in Mg(2+) binding.

Belongs to the DHBP synthase family. Homodimer. Mg(2+) serves as cofactor. The cofactor is Mn(2+).

The catalysed reaction is D-ribulose 5-phosphate = (2S)-2-hydroxy-3-oxobutyl phosphate + formate + H(+). It functions in the pathway cofactor biosynthesis; riboflavin biosynthesis; 2-hydroxy-3-oxobutyl phosphate from D-ribulose 5-phosphate: step 1/1. Its function is as follows. Catalyzes the conversion of D-ribulose 5-phosphate to formate and 3,4-dihydroxy-2-butanone 4-phosphate. This chain is 3,4-dihydroxy-2-butanone 4-phosphate synthase, found in Bordetella bronchiseptica (strain ATCC BAA-588 / NCTC 13252 / RB50) (Alcaligenes bronchisepticus).